The sequence spans 400 residues: Elongation factor Tu (400 aa).

A tr-type G domain is found at 10 to 208 (KPHLNVGTIG…TMDEYFPEPQ (199 aa)). The G1 stretch occupies residues 19-26 (GHIDHGKT). 19–26 (GHIDHGKT) is a GTP binding site. T26 provides a ligand contact to Mg(2+). The segment at 60–64 (GITIN) is G2. The G3 stretch occupies residues 81–84 (DCPG). Residues 81-85 (DCPGH) and 136-139 (NKTD) each bind GTP. The G4 stretch occupies residues 136–139 (NKTD). The segment at 174-176 (SAL) is G5.

It belongs to the TRAFAC class translation factor GTPase superfamily. Classic translation factor GTPase family. EF-Tu/EF-1A subfamily. In terms of assembly, monomer.

It is found in the cytoplasm. The catalysed reaction is GTP + H2O = GDP + phosphate + H(+). Functionally, GTP hydrolase that promotes the GTP-dependent binding of aminoacyl-tRNA to the A-site of ribosomes during protein biosynthesis. This Thermosipho melanesiensis (strain DSM 12029 / CIP 104789 / BI429) protein is Elongation factor Tu.